Consider the following 251-residue polypeptide: Probable transcriptional regulatory protein CT1665 (251 aa).

It belongs to the TACO1 family.

It localises to the cytoplasm. This is Probable transcriptional regulatory protein CT1665 from Chlorobaculum tepidum (strain ATCC 49652 / DSM 12025 / NBRC 103806 / TLS) (Chlorobium tepidum).